The sequence spans 251 residues: GTP cyclohydrolase FolE2 (251 aa).

Belongs to the GTP cyclohydrolase IV family.

It catalyses the reaction GTP + H2O = 7,8-dihydroneopterin 3'-triphosphate + formate + H(+). Its pathway is cofactor biosynthesis; 7,8-dihydroneopterin triphosphate biosynthesis; 7,8-dihydroneopterin triphosphate from GTP: step 1/1. Converts GTP to 7,8-dihydroneopterin triphosphate. The polypeptide is GTP cyclohydrolase FolE2 (Desulfotalea psychrophila (strain LSv54 / DSM 12343)).